The following is a 459-amino-acid chain: Type IV methyl-directed restriction enzyme EcoKMcrB subunit (459 aa).

GTP contacts are provided by residues 201–208, 300–303, and 333–336; these read GPPGVGKT, DKRG, and NTAD.

Its function is as follows. Recognizes N4- and C5-methylcytosine (and 5-hydroxy-methylcytosines) produced by a broad range of DNA methylases and appears to act against 5-methylcytosine preceded by a purine residue. Binds to DNA containing methylated cytosines; also binds to GTP. Isoform 33 kDa is less active than isoform 51 kDa and may play a role in regulating the activity of isoform 51 kDa by competing with it in DNA and protein binding abilities. The chain is Type IV methyl-directed restriction enzyme EcoKMcrB subunit (mcrB) from Escherichia coli (strain K12).